Reading from the N-terminus, the 869-residue chain is Serendipity locus protein H-1 (869 aa).

Positions 1 to 17 are enriched in basic and acidic residues; it reads MEGGKGEGKRMKEEAPS. 2 disordered regions span residues 1-32 and 134-165; these read MEGGKGEGKRMKEEAPSKKLPPKIYGGDAGTP and FSVTFLRPEPPNAFTNSPFKKTSSSGTSTPVK. The segment covering 146-164 has biased composition (polar residues); that stretch reads AFTNSPFKKTSSSGTSTPV. 8 consecutive C2H2-type zinc fingers follow at residues 269–293, 299–321, 331–352, 358–380, 386–408, 414–436, 442–464, and 470–493; these read HKCLDCNGLLLETPDEVAKHEAAAH, YRCSECQREFELLAGLKKHLKTH, KKCPDCGKCLKLGSMWMHRKIH, YQCDICGQKFVQKINLTHHARIH, YECPECQKRFQERSHLQRHQKYH, YRCEKCGKMYKTERCLKVHNLVH, FACTVCDKSFISNSKLKQHSNIH, and FKCNYCPRDFTNFPNWLKHTRRRH. Disordered stretches follow at residues 554-573 and 617-652; these read TSTAAPAPAKQARKKKQPQQ and PKQTKAKRERKQLAPKQLQQKPQLLQQGQPQQSSLE. Over residues 630-648 the composition is skewed to low complexity; it reads APKQLQQKPQLLQQGQPQQ.

As to expression, distribution varies between nurse cells and the oocyte during oogenesis. Weakly expressed in follicle and border cells.

It is found in the nucleus. In terms of biological role, may belong to a complex set of multifingered proteins which play an important role in gene activation or regulation at early embryonic stages through a maximal accumulation of their transcripts (or protein product) in the mature oocyte. This Drosophila melanogaster (Fruit fly) protein is Serendipity locus protein H-1 (wdn).